Here is a 151-residue protein sequence, read N- to C-terminus: D-aminoacyl-tRNA deacylase (151 aa).

A Gly-cisPro motif, important for rejection of L-amino acids motif is present at residues Gly-137–Pro-138.

Belongs to the DTD family. Homodimer.

The protein resides in the cytoplasm. The catalysed reaction is glycyl-tRNA(Ala) + H2O = tRNA(Ala) + glycine + H(+). It carries out the reaction a D-aminoacyl-tRNA + H2O = a tRNA + a D-alpha-amino acid + H(+). In terms of biological role, an aminoacyl-tRNA editing enzyme that deacylates mischarged D-aminoacyl-tRNAs. Also deacylates mischarged glycyl-tRNA(Ala), protecting cells against glycine mischarging by AlaRS. Acts via tRNA-based rather than protein-based catalysis; rejects L-amino acids rather than detecting D-amino acids in the active site. By recycling D-aminoacyl-tRNA to D-amino acids and free tRNA molecules, this enzyme counteracts the toxicity associated with the formation of D-aminoacyl-tRNA entities in vivo and helps enforce protein L-homochirality. This chain is D-aminoacyl-tRNA deacylase, found in Geobacter metallireducens (strain ATCC 53774 / DSM 7210 / GS-15).